A 378-amino-acid chain; its full sequence is Glutamate 5-kinase (378 aa).

Lys19 contributes to the ATP binding site. Ser59, Asp146, and Asn158 together coordinate substrate. 178–179 (TD) lines the ATP pocket. One can recognise a PUA domain in the interval 285–363 (RGSVTVDPGA…SEFEKLLGYT (79 aa)).

This sequence belongs to the glutamate 5-kinase family.

Its subcellular location is the cytoplasm. The catalysed reaction is L-glutamate + ATP = L-glutamyl 5-phosphate + ADP. The protein operates within amino-acid biosynthesis; L-proline biosynthesis; L-glutamate 5-semialdehyde from L-glutamate: step 1/2. Its function is as follows. Catalyzes the transfer of a phosphate group to glutamate to form L-glutamate 5-phosphate. This Polaromonas naphthalenivorans (strain CJ2) protein is Glutamate 5-kinase.